Consider the following 239-residue polypeptide: Tetraspanin-9 (239 aa).

The next 3 membrane-spanning stretches (helical) occupy residues 14-34 (FLFNLIFWLCGCGLLGVGIWL), 56-76 (LVIAIGTIVMVTGFLGCLGAI), and 86-106 (FFIVLLIILLAELILIILFFV). Residues N180 and N181 are each glycosylated (N-linked (GlcNAc...) asparagine). The helical transmembrane segment at 204 to 224 (VLGTVGMCLLITQILGMAFSM) threads the bilayer.

The protein belongs to the tetraspanin (TM4SF) family. In terms of assembly, found in a complex with GP6. In terms of processing, glycosylated.

Its subcellular location is the membrane. This Ovis aries (Sheep) protein is Tetraspanin-9 (TSPAN9).